The primary structure comprises 697 residues: Potassium-transporting ATPase ATP-binding subunit (697 aa).

4 helical membrane-spanning segments follow: residues 55–75 (PIMF…FLPS), 82–102 (GWFN…ANFA), 245–265 (LTFI…YLGF), and 271–291 (VLVA…LSAI). Catalysis depends on aspartate 324, which acts as the 4-aspartylphosphate intermediate. Residues aspartate 361, glutamate 365, 393–400 (FKAETRMS), and lysine 412 each bind ATP. Residues aspartate 535 and aspartate 539 each contribute to the Mg(2+) site. Transmembrane regions (helical) follow at residues 605-625 (FAII…LNIM), 633-653 (AILS…PLAM), and 677-697 (GGVI…GLFI).

It belongs to the cation transport ATPase (P-type) (TC 3.A.3) family. Type IA subfamily. As to quaternary structure, the system is composed of three essential subunits: KdpA, KdpB and KdpC.

It is found in the cell membrane. It catalyses the reaction K(+)(out) + ATP + H2O = K(+)(in) + ADP + phosphate + H(+). Part of the high-affinity ATP-driven potassium transport (or Kdp) system, which catalyzes the hydrolysis of ATP coupled with the electrogenic transport of potassium into the cytoplasm. This subunit is responsible for energy coupling to the transport system and for the release of the potassium ions to the cytoplasm. The chain is Potassium-transporting ATPase ATP-binding subunit from Bacillus cereus (strain AH187).